Consider the following 458-residue polypeptide: Exodeoxyribonuclease 7 large subunit (458 aa).

Belongs to the XseA family. As to quaternary structure, heterooligomer composed of large and small subunits.

Its subcellular location is the cytoplasm. It carries out the reaction Exonucleolytic cleavage in either 5'- to 3'- or 3'- to 5'-direction to yield nucleoside 5'-phosphates.. Its function is as follows. Bidirectionally degrades single-stranded DNA into large acid-insoluble oligonucleotides, which are then degraded further into small acid-soluble oligonucleotides. The sequence is that of Exodeoxyribonuclease 7 large subunit from Escherichia coli O81 (strain ED1a).